The following is a 190-amino-acid chain: 6,7-dimethyl-8-ribityllumazine synthase (190 aa).

Residues F23, 61-63, and 85-87 contribute to the 5-amino-6-(D-ribitylamino)uracil site; these read SFE and AVI. 90–91 is a (2S)-2-hydroxy-3-oxobutyl phosphate binding site; it reads QT. H93 functions as the Proton donor in the catalytic mechanism. Residue F118 participates in 5-amino-6-(D-ribitylamino)uracil binding. Residue R132 participates in (2S)-2-hydroxy-3-oxobutyl phosphate binding.

Belongs to the DMRL synthase family.

It catalyses the reaction (2S)-2-hydroxy-3-oxobutyl phosphate + 5-amino-6-(D-ribitylamino)uracil = 6,7-dimethyl-8-(1-D-ribityl)lumazine + phosphate + 2 H2O + H(+). It participates in cofactor biosynthesis; riboflavin biosynthesis; riboflavin from 2-hydroxy-3-oxobutyl phosphate and 5-amino-6-(D-ribitylamino)uracil: step 1/2. In terms of biological role, catalyzes the formation of 6,7-dimethyl-8-ribityllumazine by condensation of 5-amino-6-(D-ribitylamino)uracil with 3,4-dihydroxy-2-butanone 4-phosphate. This is the penultimate step in the biosynthesis of riboflavin. The chain is 6,7-dimethyl-8-ribityllumazine synthase from Nostoc sp. (strain PCC 7120 / SAG 25.82 / UTEX 2576).